Consider the following 233-residue polypeptide: Protein Mis18-alpha (233 aa).

Phosphoserine occurs at positions 36, 39, and 40. Residues 80-178 enclose the Mis18 domain; it reads PLVFLCSGCR…SVEAIESYVL (99 aa). Positions 85, 88, 141, and 144 each coordinate Zn(2+). Lys-162 participates in a covalent cross-link: Glycyl lysine isopeptide (Lys-Gly) (interchain with G-Cter in SUMO2). Ser-233 carries the phosphoserine modification.

Belongs to the mis18 family. As to quaternary structure, homodimer, and heterodimer with OIP5/MIS18B. Identified in a complex containing MIS18A, OIP5/MIS18B, MIS18BP1, RBBP7 and RBBP4. In terms of tissue distribution, detected in testis.

The protein localises to the nucleus. It is found in the chromosome. It localises to the centromere. Required for recruitment of CENPA to centromeres and normal chromosome segregation during mitosis. This Homo sapiens (Human) protein is Protein Mis18-alpha (MIS18A).